Reading from the N-terminus, the 399-residue chain is Serine/threonine-protein kinase PKZ1 (399 aa).

A disordered region spans residues P30–R50. The Protein kinase domain maps to W92–M371. ATP is bound by residues I98–V106 and K121. The active-site Proton acceptor is D219.

This sequence belongs to the protein kinase superfamily. CAMK Ser/Thr protein kinase family.

It carries out the reaction L-seryl-[protein] + ATP = O-phospho-L-seryl-[protein] + ADP + H(+). It catalyses the reaction L-threonyl-[protein] + ATP = O-phospho-L-threonyl-[protein] + ADP + H(+). Functionally, may regulate an early stage of the zoospore pathway. The chain is Serine/threonine-protein kinase PKZ1 from Phytophthora infestans (strain T30-4) (Potato late blight agent).